We begin with the raw amino-acid sequence, 279 residues long: High choriolytic enzyme 2 (279 aa).

Residues 1-20 (MNLASSACLLLLFLLGIAQA) form the signal peptide. The propeptide at 21-79 (LPVQNEEGHEEGNKEGHGEEGVEEGDEDDFVDFTTRILTSNNNTDQLLLEGDLVAPTNR) is activation peptide. Basic and acidic residues predominate over residues 26 to 40 (EEGHEEGNKEGHGEE). The segment at 26–46 (EEGHEEGNKEGHGEEGVEEGD) is disordered. An N-linked (GlcNAc...) asparagine glycan is attached at Asn62. The Peptidase M12A domain maps to 80–279 (NAMKCWYNSC…TRSNVLYNCR (200 aa)). 3 cysteine pairs are disulfide-bonded: Cys84–Cys89, Cys129–Cys278, and Cys150–Cys170. His178 provides a ligand contact to Zn(2+). Glu179 is an active-site residue. Residues His182 and His188 each contribute to the Zn(2+) site.

Zn(2+) is required as a cofactor.

Its subcellular location is the zymogen granule. The enzyme catalyses Hydrolysis of the inner layer of fish egg envelope. Also hydrolysis of casein and small molecule substrates such as succinyl-Leu-Leu-Val-Tyr-|-7-(4-methyl)coumarylamide.. Participates in the breakdown of the egg envelope, which is derived from the egg extracellular matrix, at the time of hatching. Thus allowing the newly hatched fish to swim free. HCE binds tightly to the egg envelope while it exerts the choriolytic swelling action. This is High choriolytic enzyme 2 (hceb) from Oryzias latipes (Japanese rice fish).